Consider the following 178-residue polypeptide: Small ribosomal subunit protein uS5 (178 aa).

An S5 DRBM domain is found at Phe15 to Val78.

The protein belongs to the universal ribosomal protein uS5 family. Part of the 30S ribosomal subunit. Contacts proteins S4 and S8.

Its function is as follows. With S4 and S12 plays an important role in translational accuracy. Located at the back of the 30S subunit body where it stabilizes the conformation of the head with respect to the body. This chain is Small ribosomal subunit protein uS5, found in Thermotoga maritima (strain ATCC 43589 / DSM 3109 / JCM 10099 / NBRC 100826 / MSB8).